The following is a 130-amino-acid chain: Small ribosomal subunit protein uS9 (130 aa).

It belongs to the universal ribosomal protein uS9 family.

This Haemophilus influenzae (strain ATCC 51907 / DSM 11121 / KW20 / Rd) protein is Small ribosomal subunit protein uS9 (rpsI).